Here is a 339-residue protein sequence, read N- to C-terminus: tRNA-splicing endonuclease (339 aa).

Residues Tyr274, His285, and Lys316 contribute to the active site.

The protein belongs to the tRNA-intron endonuclease family. Archaeal long subfamily. In terms of assembly, homodimer. Ca(2+) serves as cofactor. It depends on Mg(2+) as a cofactor. Post-translationally, the N-terminus is blocked.

The catalysed reaction is pretRNA = a 3'-half-tRNA molecule with a 5'-OH end + a 5'-half-tRNA molecule with a 2',3'-cyclic phosphate end + an intron with a 2',3'-cyclic phosphate and a 5'-hydroxyl terminus.. In terms of biological role, endonuclease that removes tRNA introns. Cleaves pre-tRNA at the 5'- and 3'-splice sites to release the intron. The products are an intron and two tRNA half-molecules bearing 2',3' cyclic phosphate and 5'-OH termini. Recognizes a pseudosymmetric substrate in which 2 bulged loops of 3 bases are separated by a stem of 4 bp. The polypeptide is tRNA-splicing endonuclease (Haloferax volcanii (strain ATCC 29605 / DSM 3757 / JCM 8879 / NBRC 14742 / NCIMB 2012 / VKM B-1768 / DS2) (Halobacterium volcanii)).